We begin with the raw amino-acid sequence, 259 residues long: ATP synthase subunit b 2 (259 aa).

Residues 5-27 (WFTVSAQAINFLILVALLKRFLY) traverse the membrane as a helical segment.

It belongs to the ATPase B chain family. As to quaternary structure, F-type ATPases have 2 components, F(1) - the catalytic core - and F(0) - the membrane proton channel. F(1) has five subunits: alpha(3), beta(3), gamma(1), delta(1), epsilon(1). F(0) has three main subunits: a(1), b(2) and c(10-14). The alpha and beta chains form an alternating ring which encloses part of the gamma chain. F(1) is attached to F(0) by a central stalk formed by the gamma and epsilon chains, while a peripheral stalk is formed by the delta and b chains.

The protein localises to the cell inner membrane. In terms of biological role, f(1)F(0) ATP synthase produces ATP from ADP in the presence of a proton or sodium gradient. F-type ATPases consist of two structural domains, F(1) containing the extramembraneous catalytic core and F(0) containing the membrane proton channel, linked together by a central stalk and a peripheral stalk. During catalysis, ATP synthesis in the catalytic domain of F(1) is coupled via a rotary mechanism of the central stalk subunits to proton translocation. Its function is as follows. Component of the F(0) channel, it forms part of the peripheral stalk, linking F(1) to F(0). The sequence is that of ATP synthase subunit b 2 from Syntrophotalea carbinolica (strain DSM 2380 / NBRC 103641 / GraBd1) (Pelobacter carbinolicus).